Here is a 543-residue protein sequence, read N- to C-terminus: Limonene hydroxylase (543 aa).

Positions 232–464 constitute a Sigma-54 factor interaction domain; the sequence is VVTYNPSFEK…LRNVIERAFL (233 aa). ATP-binding positions include 260–267 and 324–333; these read GETGSGKE and ADGGTLFLDE.

It catalyses the reaction (4S)-limonene + reduced [NADPH--hemoprotein reductase] + O2 = (1S,5R)-carveol + oxidized [NADPH--hemoprotein reductase] + H2O + H(+). The catalysed reaction is (4S)-limonene + reduced [NADPH--hemoprotein reductase] + O2 = (4S)-perillyl alcohol + oxidized [NADPH--hemoprotein reductase] + H2O + H(+). It carries out the reaction perillyl alcohol + NAD(+) = perillyl aldehyde + NADH + H(+). The enzyme catalyses (1S,5R)-carveol + NADP(+) = (R)-carvone + NADPH + H(+). In terms of biological role, involved in limonene hydroxylation to a mixture of carveol and perillyl alcohol as well as in dehydrogenation of these products to carvone and perillyl aldehyde. Aromatic alcohols containing an isopropyl or isopropenyl group at ring position 4 also served as substrates for the dehydrogenase activity. In Geobacillus stearothermophilus (Bacillus stearothermophilus), this protein is Limonene hydroxylase.